A 178-amino-acid chain; its full sequence is MSRVGKLPIEIPVGVEVCVNGRTVSITGPKGSLYLDIAEQIGVSVSDGKVLVSRSDDSRTARALHGLTRALIANNVHGVLHGYTKTLEIVGTGYRVSKKGENLELALGFSHPVFVDPVPGVSFGVEGNSKIIVSGIDKQAVGEAAASIRKLSKPEPYKGKGIRYSDEIVRRKVGKAGK.

This sequence belongs to the universal ribosomal protein uL6 family. Part of the 50S ribosomal subunit.

Functionally, this protein binds to the 23S rRNA, and is important in its secondary structure. It is located near the subunit interface in the base of the L7/L12 stalk, and near the tRNA binding site of the peptidyltransferase center. The protein is Large ribosomal subunit protein uL6 of Tropheryma whipplei (strain TW08/27) (Whipple's bacillus).